The following is a 247-amino-acid chain: MRQMIVGNWKMNGLGAPSRDLVGEIAEGLATIPSPPQVVVCPPFTQLAGIGPLLKGSGIALGAQDCHQAASGAHTGDISAAMLADLGVEYVVLGHSERRRDHGELDETVREKTQTALAAGLTPIVCIGETGDQKASGESRDAIGWQIQGSLPDGFSGVVAYEPVWAIGSGNPAASQDIADMMGFIRAELVRQFGAAGKTIRILYGGSVNGRDAASILPIAEVGGALVGSASLQADTFLPIVRAAVDL.

8 to 10 (NWK) contributes to the substrate binding site. The active-site Electrophile is His95. The active-site Proton acceptor is the Glu162. Gly168 and Ser207 together coordinate substrate.

This sequence belongs to the triosephosphate isomerase family. As to quaternary structure, homodimer.

The protein resides in the cytoplasm. The enzyme catalyses D-glyceraldehyde 3-phosphate = dihydroxyacetone phosphate. It participates in carbohydrate biosynthesis; gluconeogenesis. It functions in the pathway carbohydrate degradation; glycolysis; D-glyceraldehyde 3-phosphate from glycerone phosphate: step 1/1. Functionally, involved in the gluconeogenesis. Catalyzes stereospecifically the conversion of dihydroxyacetone phosphate (DHAP) to D-glyceraldehyde-3-phosphate (G3P). The protein is Triosephosphate isomerase of Gluconacetobacter diazotrophicus (strain ATCC 49037 / DSM 5601 / CCUG 37298 / CIP 103539 / LMG 7603 / PAl5).